The following is a 179-amino-acid chain: ATP synthase subunit delta (179 aa).

The protein belongs to the ATPase delta chain family. As to quaternary structure, F-type ATPases have 2 components, F(1) - the catalytic core - and F(0) - the membrane proton channel. F(1) has five subunits: alpha(3), beta(3), gamma(1), delta(1), epsilon(1). F(0) has three main subunits: a(1), b(2) and c(10-14). The alpha and beta chains form an alternating ring which encloses part of the gamma chain. F(1) is attached to F(0) by a central stalk formed by the gamma and epsilon chains, while a peripheral stalk is formed by the delta and b chains.

Its subcellular location is the cell inner membrane. Functionally, f(1)F(0) ATP synthase produces ATP from ADP in the presence of a proton or sodium gradient. F-type ATPases consist of two structural domains, F(1) containing the extramembraneous catalytic core and F(0) containing the membrane proton channel, linked together by a central stalk and a peripheral stalk. During catalysis, ATP synthesis in the catalytic domain of F(1) is coupled via a rotary mechanism of the central stalk subunits to proton translocation. This protein is part of the stalk that links CF(0) to CF(1). It either transmits conformational changes from CF(0) to CF(1) or is implicated in proton conduction. The chain is ATP synthase subunit delta from Burkholderia lata (strain ATCC 17760 / DSM 23089 / LMG 22485 / NCIMB 9086 / R18194 / 383).